A 672-amino-acid polypeptide reads, in one-letter code: Iron-phytosiderophore transporter YSL15 (672 aa).

The segment covering 1 to 11 (MEHADADRTRV) has biased composition (basic and acidic residues). A disordered region spans residues 1–27 (MEHADADRTRVAPEIGSLHDEDAEADP). The next 14 membrane-spanning stretches (helical) occupy residues 47 to 67 (GVVA…KIAL), 70 to 90 (GLVP…LRGW), 115 to 135 (CAVA…LLGL), 158 to 178 (GIGW…LSLI), 218 to 238 (LHGF…QWFY), 279 to 299 (LVNL…WPLI), 325 to 345 (FLCI…VTGV), 390 to 410 (MAYS…PIMF), 418 to 438 (VIIA…GAGL), 450 to 470 (IALF…AGLV), 504 to 524 (VGEL…FMLF), 556 to 576 (ISAL…FAVL), 602 to 622 (FLVG…LFAW), and 630 to 650 (AAFM…IWTF).

It belongs to the YSL (TC 2.A.67.2) family. As to expression, expressed in root phloem and at low levels in the shoot companion cells.

It localises to the cell membrane. Functionally, involved in Fe(3+) uptake from the rhizosphere and phloem transport of iron. Plays an important role in iron homeostasis during the early stages of growth. Transports Fe(3+)-phytosiderophore, but not Fe(3+)- or Fe(2+)-nicotianamine. May not transport other chelated metals. The polypeptide is Iron-phytosiderophore transporter YSL15 (YSL15) (Oryza sativa subsp. japonica (Rice)).